Reading from the N-terminus, the 174-residue chain is Large ribosomal subunit protein uL18 (174 aa).

This sequence belongs to the universal ribosomal protein uL18 family. As to quaternary structure, part of the 50S ribosomal subunit. Contacts the 5S and 23S rRNAs.

In terms of biological role, this is one of the proteins that bind and probably mediate the attachment of the 5S RNA into the large ribosomal subunit, where it forms part of the central protuberance. This chain is Large ribosomal subunit protein uL18, found in Methanocorpusculum labreanum (strain ATCC 43576 / DSM 4855 / Z).